The primary structure comprises 174 residues: NADH-ubiquinone oxidoreductase chain 6 (174 aa).

6 helical membrane-spanning segments follow: residues 1–21 (MTYVLFLLSVSLVMGFVGFSS), 24–44 (SPIYGGLVLIVSGVVGCTIIL), 47–67 (GGGYMGLMVFLIYLGGMMVVF), 86–106 (VEVLVSVLVGLAMEVGLVLWV), 111–131 (GVVVVVNFNSVGSWMIYEGEG), and 151–171 (WLVVVTGWTLFVGVYIVIEIA).

It belongs to the complex I subunit 6 family. Core subunit of respiratory chain NADH dehydrogenase (Complex I) which is composed of 45 different subunits.

The protein resides in the mitochondrion inner membrane. The catalysed reaction is a ubiquinone + NADH + 5 H(+)(in) = a ubiquinol + NAD(+) + 4 H(+)(out). Functionally, core subunit of the mitochondrial membrane respiratory chain NADH dehydrogenase (Complex I) which catalyzes electron transfer from NADH through the respiratory chain, using ubiquinone as an electron acceptor. Essential for the catalytic activity and assembly of complex I. The polypeptide is NADH-ubiquinone oxidoreductase chain 6 (MT-ND6) (Pan paniscus (Pygmy chimpanzee)).